The primary structure comprises 219 residues: MLTQDQLKLAVAKKALEFVPEDAIIGVGTGSTVNLFIEELAGIKGRIKGAVSSSEASTARLKAHHIQVFDLNEVEKLSVYIDGADEINHHLHMIKGGGAALTREKIVAGVADEFICIADEKKYVTMLGAFPLPIEVIPMARSYVARELVKLGGHPELRQGVTTDNGNVILDVHGLQIMKPVELEETINHIAGVVTCGLFARRRADVLLLGKQDGVEVLR.

Substrate contacts are provided by residues 29 to 32, 82 to 85, and 95 to 98; these read TGST, DGAD, and KGGG. The active-site Proton acceptor is the glutamate 104. Residue lysine 122 participates in substrate binding.

Belongs to the ribose 5-phosphate isomerase family. In terms of assembly, homodimer.

It carries out the reaction aldehydo-D-ribose 5-phosphate = D-ribulose 5-phosphate. It participates in carbohydrate degradation; pentose phosphate pathway; D-ribose 5-phosphate from D-ribulose 5-phosphate (non-oxidative stage): step 1/1. Functionally, catalyzes the reversible conversion of ribose-5-phosphate to ribulose 5-phosphate. The polypeptide is Ribose-5-phosphate isomerase A (Chromobacterium violaceum (strain ATCC 12472 / DSM 30191 / JCM 1249 / CCUG 213 / NBRC 12614 / NCIMB 9131 / NCTC 9757 / MK)).